A 176-amino-acid polypeptide reads, in one-letter code: Nascent polypeptide-associated complex subunit alpha (176 aa).

The region spanning 16-80 (PKNEKKAREL…AKVDDMNQRI (65 aa)) is the NAC-A/B domain. Residues 83 to 110 (AQAAQAAETDAHAGHTHSHGEEDKSPEA) are disordered. Over residues 91–110 (TDAHAGHTHSHGEEDKSPEA) the composition is skewed to basic and acidic residues. The UBA domain occupies 138-175 (LDAKDIDIIVEQTQVSRAKAVKALRKHDGDMVNAIMEL).

The protein belongs to the NAC-alpha family. In terms of assembly, part of the nascent polypeptide-associated complex (NAC), consisting of EGD2 and EGD1. NAC associates with ribosomes via EGD1.

Its subcellular location is the cytoplasm. It is found in the nucleus. Component of the nascent polypeptide-associated complex (NAC), a dynamic component of the ribosomal exit tunnel, protecting the emerging polypeptides from interaction with other cytoplasmic proteins to ensure appropriate nascent protein targeting. The NAC complex also promotes mitochondrial protein import by enhancing productive ribosome interactions with the outer mitochondrial membrane and blocks the inappropriate interaction of ribosomes translating non-secretory nascent polypeptides with translocation sites in the membrane of the endoplasmic reticulum. EGD2 may also be involved in transcription regulation. The chain is Nascent polypeptide-associated complex subunit alpha (EGD2) from Scheffersomyces stipitis (strain ATCC 58785 / CBS 6054 / NBRC 10063 / NRRL Y-11545) (Yeast).